Here is a 90-residue protein sequence, read N- to C-terminus: Small ribosomal subunit protein bS16 (90 aa).

The protein belongs to the bacterial ribosomal protein bS16 family.

The sequence is that of Small ribosomal subunit protein bS16 from Geobacillus kaustophilus (strain HTA426).